The primary structure comprises 102 residues: Large ribosomal subunit protein mL63 (102 aa).

The protein belongs to the mitochondrion-specific ribosomal protein mL63 family. Component of the mitochondrial large ribosomal subunit (mt-LSU). Mature mammalian 55S mitochondrial ribosomes consist of a small (28S) and a large (39S) subunit. The 28S small subunit contains a 12S ribosomal RNA (12S mt-rRNA) and 30 different proteins. The 39S large subunit contains a 16S rRNA (16S mt-rRNA), a copy of mitochondrial valine transfer RNA (mt-tRNA(Val)), which plays an integral structural role, and 52 different proteins.

The protein resides in the mitochondrion. The chain is Large ribosomal subunit protein mL63 (MRPL57) from Homo sapiens (Human).